The primary structure comprises 312 residues: MNHIFKHIPVMKKELIDSLKIKKNGIYIDSTFGTGGHSNEILKKLGQSGRLYSIDRDPIAFSIGSKIKDSRFHIINENFSKLLDFAKNEKIIGKVNGIIFDLGVSSIQIDDYRRGFSFKNDGPLDMRMNPNYGISASEWLFESNVKEISFVLKNFGEERFSRKIAYAIKRRSQIKKITSTLELANIIKKTIPTKNKFKHPARRSFQAIRIYINQELEEIHKALESTLKILKPGGRISIISFHSLEDRLVKKFMIKNSTKAIIPYGMPITEEQLNRLTTCKLKIINRILPTQNEINNNPRARSSVLRIAEIQE.

Residues G35–H37, D55, F85, D101, and Q108 contribute to the S-adenosyl-L-methionine site.

It belongs to the methyltransferase superfamily. RsmH family.

The protein localises to the cytoplasm. The catalysed reaction is cytidine(1402) in 16S rRNA + S-adenosyl-L-methionine = N(4)-methylcytidine(1402) in 16S rRNA + S-adenosyl-L-homocysteine + H(+). Functionally, specifically methylates the N4 position of cytidine in position 1402 (C1402) of 16S rRNA. The sequence is that of Ribosomal RNA small subunit methyltransferase H from Buchnera aphidicola subsp. Acyrthosiphon pisum (strain Tuc7).